Here is a 227-residue protein sequence, read N- to C-terminus: MGPLHQFLLLLITALSQALNTTVLQGMAGQSLRVSCTYDALKHWGRRKAWCRQLGEEGPCQRVVSTHGVWLLAFLKKRNGSTVIADDTLAGTVTITLKNLQAGDAGLYQCQSLRGREAEVLQKVLVEVLEDPLDDQDAGDLWVPEESSSFEGAQVEHSTSRNQETSFPPTSILLLLACVLLSKFLAASILWAVARGRQKPGTPVVRGLDCGQDAGHQLQILTGPGGT.

A signal peptide spans 1–18; the sequence is MGPLHQFLLLLITALSQA. At 19-171 the chain is on the extracellular side; sequence LNTTVLQGMA…NQETSFPPTS (153 aa). A glycan (N-linked (GlcNAc...) asparagine) is linked at asparagine 20. In terms of domain architecture, Ig-like V-type spans 29 to 112; the sequence is GQSLRVSCTY…GDAGLYQCQS (84 aa). Intrachain disulfides connect cysteine 36–cysteine 110 and cysteine 51–cysteine 60. A 1,2-diacyl-sn-glycero-3-phospho-L-serine is bound at residue histidine 67. Asparagine 79 carries an N-linked (GlcNAc...) asparagine glycan. Residue threonine 88 participates in a 1,2-diacyl-sn-glycero-3-phospho-L-serine binding. Residues 172-192 form a helical membrane-spanning segment; it reads ILLLLACVLLSKFLAASILWA. The Cytoplasmic segment spans residues 193-227; that stretch reads VARGRQKPGTPVVRGLDCGQDAGHQLQILTGPGGT.

In terms of assembly, monomer. After ectodomain shedding, the extracellular domain oligomerizes, which is enhanced and stabilized by binding of phosphatidylserine. Interacts with TYROBP/DAP12. Interaction with TYROBP is required for stabilization of the TREM2 C-terminal fragment (TREM2-CTF) which is produced by proteolytic processing. Interacts with PLXNA1 (via TIG domains); the interaction mediates SEMA6D binding and signaling through TYROBP. Undergoes ectodomain shedding through proteolytic cleavage by ADAM10 and ADAM17 to produce a transmembrane segment, the TREM2 C-terminal fragment (TREM2-CTF), which is subsequently cleaved by gamma-secretase. As to expression, expressed in the brain, specifically in microglia (at protein level). Expressed in macrophages (at protein level). Expressed at higher levels in the CNS, heart and lung than in lymph nodes or in other non-lymphoid tissues such as kidney, liver and testis. In the CNS not all microglia express TREM2. Brain regions with an incomplete blood-brain barrier had the lowest percentages of TREM2 expressing microglia, whereas the lateral entorhinal and cingulate cortex had the highest percentages.

It localises to the cell membrane. The protein localises to the secreted. Functionally, forms a receptor signaling complex with TYROBP which mediates signaling and cell activation following ligand binding. Acts as a receptor for amyloid-beta protein 42, a cleavage product of the amyloid-beta precursor protein APP, and mediates its uptake and degradation by microglia. Binding to amyloid-beta 42 mediates microglial activation, proliferation, migration, apoptosis and expression of pro-inflammatory cytokines, such as IL6R and CCL3, and the anti-inflammatory cytokine ARG1. Acts as a receptor for lipoprotein particles such as LDL, VLDL, and HDL and for apolipoproteins such as APOA1, APOA2, APOB, APOE, APOE2, APOE3, APOE4, and CLU and enhances their uptake in microglia. Binds phospholipids (preferably anionic lipids) such as phosphatidylserine, phosphatidylethanolamine, phosphatidylglycerol and sphingomyelin. Regulates microglial proliferation by acting as an upstream regulator of the Wnt/beta-catenin signaling cascade. Required for microglial phagocytosis of apoptotic neurons. Also required for microglial activation and phagocytosis of myelin debris after neuronal injury and of neuronal synapses during synapse elimination in the developing brain. Regulates microglial chemotaxis and process outgrowth, and also the microglial response to oxidative stress and lipopolysaccharide. It suppresses PI3K and NF-kappa-B signaling in response to lipopolysaccharide; thus promoting phagocytosis, suppressing pro-inflammatory cytokine and nitric oxide production, inhibiting apoptosis and increasing expression of IL10 and TGFB. During oxidative stress, it promotes anti-apoptotic NF-kappa-B signaling and ERK signaling. Plays a role in microglial MTOR activation and metabolism. Regulates age-related changes in microglial numbers. Triggers activation of the immune responses in macrophages and dendritic cells. Mediates cytokine-induced formation of multinucleated giant cells which are formed by the fusion of macrophages. In dendritic cells, receptor of SEMA6D with PLEXNA1 as coreceptor and mediates up-regulation of chemokine receptor CCR7 and dendritic cell maturation and survival. Involved in the positive regulation of osteoclast differentiation. In Mus musculus (Mouse), this protein is Triggering receptor expressed on myeloid cells 2 (Trem2).